The primary structure comprises 373 residues: Anhydro-N-acetylmuramic acid kinase (373 aa).

Residue 12–19 (GTSLDGVD) coordinates ATP.

Belongs to the anhydro-N-acetylmuramic acid kinase family.

It catalyses the reaction 1,6-anhydro-N-acetyl-beta-muramate + ATP + H2O = N-acetyl-D-muramate 6-phosphate + ADP + H(+). The protein operates within amino-sugar metabolism; 1,6-anhydro-N-acetylmuramate degradation. Its pathway is cell wall biogenesis; peptidoglycan recycling. Its function is as follows. Catalyzes the specific phosphorylation of 1,6-anhydro-N-acetylmuramic acid (anhMurNAc) with the simultaneous cleavage of the 1,6-anhydro ring, generating MurNAc-6-P. Is required for the utilization of anhMurNAc either imported from the medium or derived from its own cell wall murein, and thus plays a role in cell wall recycling. In Serratia proteamaculans (strain 568), this protein is Anhydro-N-acetylmuramic acid kinase.